Consider the following 121-residue polypeptide: Securin (121 aa).

Positions 1–24 are disordered; it reads RATEKSVKTNGPLKQKQTTFSAKK. 2 consecutive short sequence motifs (TEK-box) follow at residues 3 to 5 and 26 to 28; these read TEK. The tract at residues 93 to 121 is disordered; the sequence is LGPPSPLNMPSPPWESDVLQSPSSILSTL. Positions 95 to 105 match the SH3-binding motif; the sequence is PPSPLNMPSPP. The segment covering 95–105 has biased composition (pro residues); the sequence is PPSPLNMPSPP. Serine 97 is subject to Phosphoserine; by CDK1. Residues 110–121 show a composition bias toward polar residues; that stretch reads VLQSPSSILSTL.

This sequence belongs to the securin family. As to quaternary structure, interacts with the caspase-like ESPL1, and prevents its protease activity probably by covering its active site. Interacts with p53/TP53 and blocks its activity probably by blocking its binding to DNA. Interacts with the Ku 70 kDa subunit of ds-DNA kinase. Interacts with PTTG1IP. Interacts with RPS10 and DNAJA1. In terms of processing, phosphorylated by CDK1 during mitosis. Phosphorylated in vitro by ds-DNA kinase. Post-translationally, ubiquitinated through 'Lys-11' linkage of ubiquitin moieties by the anaphase promoting complex (APC) at the onset of anaphase, conducting to its degradation. 'Lys-11'-linked ubiquitination is mediated by the E2 ligase UBE2C/UBCH10.

Its subcellular location is the cytoplasm. The protein localises to the nucleus. Functionally, regulatory protein, which plays a central role in chromosome stability, in the p53/TP53 pathway, and DNA repair. Probably acts by blocking the action of key proteins. During the mitosis, it blocks Separase/ESPL1 function, preventing the proteolysis of the cohesin complex and the subsequent segregation of the chromosomes. At the onset of anaphase, it is ubiquitinated, conducting to its destruction and to the liberation of ESPL1. Its function is however not limited to a blocking activity, since it is required to activate ESPL1. Negatively regulates the transcriptional activity and related apoptosis activity of p53/TP53. The negative regulation of p53/TP53 may explain the strong transforming capability of the protein when it is overexpressed. May also play a role in DNA repair via its interaction with Ku, possibly by connecting DNA damage-response pathways with sister chromatid separation. In Sus scrofa (Pig), this protein is Securin (PTTG1).